The chain runs to 664 residues: UvrABC system protein B (664 aa).

The 158-residue stretch at 23-180 (EGLNRGMRFQ…EKLAKIGYQR (158 aa)) folds into the Helicase ATP-binding domain. 36–43 (GVTGSGKT) is an ATP binding site. Positions 89-112 (YYDYYQPEAYIPTKDLYIEKNADI) match the Beta-hairpin motif. Residues 426 to 588 (QVDDLINEIV…ITPRSIVKPL (163 aa)) enclose the Helicase C-terminal domain. The region spanning 622-657 (EEYVALLEEEMYRAASELRYEDAAALRDELFRVKET) is the UVR domain.

This sequence belongs to the UvrB family. Forms a heterotetramer with UvrA during the search for lesions. Interacts with UvrC in an incision complex.

The protein localises to the cytoplasm. In terms of biological role, the UvrABC repair system catalyzes the recognition and processing of DNA lesions. A damage recognition complex composed of 2 UvrA and 2 UvrB subunits scans DNA for abnormalities. Upon binding of the UvrA(2)B(2) complex to a putative damaged site, the DNA wraps around one UvrB monomer. DNA wrap is dependent on ATP binding by UvrB and probably causes local melting of the DNA helix, facilitating insertion of UvrB beta-hairpin between the DNA strands. Then UvrB probes one DNA strand for the presence of a lesion. If a lesion is found the UvrA subunits dissociate and the UvrB-DNA preincision complex is formed. This complex is subsequently bound by UvrC and the second UvrB is released. If no lesion is found, the DNA wraps around the other UvrB subunit that will check the other stand for damage. The chain is UvrABC system protein B from Thermotoga neapolitana (strain ATCC 49049 / DSM 4359 / NBRC 107923 / NS-E).